The sequence spans 244 residues: Type III pantothenate kinase (244 aa).

7–14 (DIGNTRLK) is a binding site for ATP. Residues tyrosine 95 and 102 to 105 (GIDR) each bind substrate. The active-site Proton acceptor is the aspartate 104. Threonine 126 is an ATP binding site. Substrate is bound at residue threonine 177.

The protein belongs to the type III pantothenate kinase family. As to quaternary structure, homodimer. NH4(+) is required as a cofactor. It depends on K(+) as a cofactor.

It localises to the cytoplasm. It carries out the reaction (R)-pantothenate + ATP = (R)-4'-phosphopantothenate + ADP + H(+). Its pathway is cofactor biosynthesis; coenzyme A biosynthesis; CoA from (R)-pantothenate: step 1/5. Functionally, catalyzes the phosphorylation of pantothenate (Pan), the first step in CoA biosynthesis. This chain is Type III pantothenate kinase, found in Acinetobacter baumannii (strain ACICU).